We begin with the raw amino-acid sequence, 719 residues long: Glycine--tRNA ligase beta subunit (719 aa).

The segment at 65–84 (PDREEEIKGPPAKAAFKDGK) is disordered.

It belongs to the class-II aminoacyl-tRNA synthetase family. Tetramer of two alpha and two beta subunits.

It is found in the cytoplasm. The catalysed reaction is tRNA(Gly) + glycine + ATP = glycyl-tRNA(Gly) + AMP + diphosphate. In Trichodesmium erythraeum (strain IMS101), this protein is Glycine--tRNA ligase beta subunit.